A 490-amino-acid chain; its full sequence is Bifunctional protein GlmU (490 aa).

The interval 1–241 (MSSPGDTAVL…SALVAGVNNR (241 aa)) is pyrophosphorylase. UDP-N-acetyl-alpha-D-glucosamine-binding positions include 12–15 (LAAG), Lys26, Gln83, 88–89 (GT), 112–114 (SGD), Gly151, Glu166, Asn181, and Asn239. Asp114 provides a ligand contact to Mg(2+). Mg(2+) is bound at residue Asn239. The tract at residues 242-262 (VQLAQLGAELNRRIVAAHQLA) is linker. Residues 263–490 (GVTVVDPATT…AGGRPAGEAE (228 aa)) form an N-acetyltransferase region. UDP-N-acetyl-alpha-D-glucosamine contacts are provided by Arg344 and Lys362. His374 acts as the Proton acceptor in catalysis. 2 residues coordinate UDP-N-acetyl-alpha-D-glucosamine: Tyr377 and Asn388. Residues Ala391, 397–398 (NY), Ser416, and Ala434 each bind acetyl-CoA. The segment at 462–490 (RRKRPGSAAARAAEAAEKAAGGRPAGEAE) is disordered. Residues 467–490 (GSAAARAAEAAEKAAGGRPAGEAE) are compositionally biased toward low complexity.

It in the N-terminal section; belongs to the N-acetylglucosamine-1-phosphate uridyltransferase family. This sequence in the C-terminal section; belongs to the transferase hexapeptide repeat family. As to quaternary structure, homotrimer. It depends on Mg(2+) as a cofactor.

It localises to the cytoplasm. It carries out the reaction alpha-D-glucosamine 1-phosphate + acetyl-CoA = N-acetyl-alpha-D-glucosamine 1-phosphate + CoA + H(+). The enzyme catalyses N-acetyl-alpha-D-glucosamine 1-phosphate + UTP + H(+) = UDP-N-acetyl-alpha-D-glucosamine + diphosphate. It functions in the pathway nucleotide-sugar biosynthesis; UDP-N-acetyl-alpha-D-glucosamine biosynthesis; N-acetyl-alpha-D-glucosamine 1-phosphate from alpha-D-glucosamine 6-phosphate (route II): step 2/2. It participates in nucleotide-sugar biosynthesis; UDP-N-acetyl-alpha-D-glucosamine biosynthesis; UDP-N-acetyl-alpha-D-glucosamine from N-acetyl-alpha-D-glucosamine 1-phosphate: step 1/1. Its pathway is bacterial outer membrane biogenesis; LPS lipid A biosynthesis. In terms of biological role, catalyzes the last two sequential reactions in the de novo biosynthetic pathway for UDP-N-acetylglucosamine (UDP-GlcNAc). The C-terminal domain catalyzes the transfer of acetyl group from acetyl coenzyme A to glucosamine-1-phosphate (GlcN-1-P) to produce N-acetylglucosamine-1-phosphate (GlcNAc-1-P), which is converted into UDP-GlcNAc by the transfer of uridine 5-monophosphate (from uridine 5-triphosphate), a reaction catalyzed by the N-terminal domain. The sequence is that of Bifunctional protein GlmU from Mycobacterium avium (strain 104).